We begin with the raw amino-acid sequence, 119 residues long: Large ribosomal subunit protein bL20c (119 aa).

It belongs to the bacterial ribosomal protein bL20 family.

It localises to the plastid. The protein localises to the chloroplast. Binds directly to 23S ribosomal RNA and is necessary for the in vitro assembly process of the 50S ribosomal subunit. It is not involved in the protein synthesizing functions of that subunit. The chain is Large ribosomal subunit protein bL20c from Nandina domestica (Heavenly bamboo).